The following is a 179-amino-acid chain: Translation initiation factor IF-3 (179 aa).

Belongs to the IF-3 family. In terms of assembly, monomer.

The protein resides in the cytoplasm. In terms of biological role, IF-3 binds to the 30S ribosomal subunit and shifts the equilibrium between 70S ribosomes and their 50S and 30S subunits in favor of the free subunits, thus enhancing the availability of 30S subunits on which protein synthesis initiation begins. This chain is Translation initiation factor IF-3, found in Buchnera aphidicola subsp. Acyrthosiphon pisum (strain 5A).